A 70-amino-acid polypeptide reads, in one-letter code: Small, acid-soluble spore protein 1 (70 aa).

It belongs to the alpha/beta-type SASP family.

SASP are bound to spore DNA. They are double-stranded DNA-binding proteins that cause DNA to change to an a-like conformation. They protect the DNA backbone from chemical and enzymatic cleavage and are thus involved in dormant spore's high resistance to UV light. This chain is Small, acid-soluble spore protein 1 (sasP-1), found in Bacillus cereus.